We begin with the raw amino-acid sequence, 438 residues long: Xylose isomerase (438 aa).

Catalysis depends on residues H100 and D103. Mg(2+) contacts are provided by E231, E267, H270, D295, D306, D308, and D338.

The protein belongs to the xylose isomerase family. In terms of assembly, homotetramer. Mg(2+) serves as cofactor.

The protein localises to the cytoplasm. It carries out the reaction alpha-D-xylose = alpha-D-xylulofuranose. The chain is Xylose isomerase from Pseudomonas savastanoi pv. phaseolicola (strain 1448A / Race 6) (Pseudomonas syringae pv. phaseolicola (strain 1448A / Race 6)).